The primary structure comprises 723 residues: Transient receptor potential cation channel subfamily V member 5 (723 aa).

Over 1-320 (MGVKKPWIQL…SLKWKKYGQP (320 aa)) the chain is Cytoplasmic. ANK repeat units lie at residues 72–101 (LGET…YLVT), 110–139 (VGQT…SASA), 156–185 (YGEH…DIRA), 189–222 (LGNT…GDHL), and 232–261 (QGLT…HIQW). Residues 321-341 (YFCLLGMLYIFYMICFTTCCV) form a helical membrane-spanning segment. At 342–378 (YRPLKFRDANRTHVRDNTVLEQKPLQEAYVTYQDKVR) the chain is on the extracellular side. Residue Asn351 is glycosylated (N-linked (GlcNAc...) asparagine). A helical transmembrane segment spans residues 379 to 401 (LVGELVTVIGAVVILLIEIPDIF). Over 402-412 (RVGASRYFGHT) the chain is Cytoplasmic. Residues 413 to 435 (VLGGPFHVIIITYASLVLLIMVM) form a helical membrane-spanning segment. Residues 436-441 (RLTSMN) are Extracellular-facing. A helical membrane pass occupies residues 442 to 462 (GEVVPISMALVLGWCSVMYFS). Residues 463-485 (RGFQMLGPFTIMIQKMIFGDLLR) lie on the Cytoplasmic side of the membrane. The helical transmembrane segment at 486–506 (FCWLMAMVILGFASAFYIIFQ) threads the bilayer. Positions 517–537 (SDYPTAMFSTFELFLTIIDGP) form an intramembrane region, pore-forming. Position 535 (Asp535) interacts with Ca(2+). A helical membrane pass occupies residues 550–570 (LTYFAFAIIATLLMLNLFIAM). At 571 to 723 (MGDTHWRVAQ…EGDGEEIYHF (153 aa)) the chain is on the cytoplasmic side. The interval 591 to 595 (VATTV) is interaction with S100A10. Residues 643-646 (AFKS) form an involved in Ca(2+)-dependent inactivation region. Positions 651 to 674 (EVQEQLSEKQPSGTETGTLARGSV) are disordered. The segment covering 654-667 (EQLSEKQPSGTETG) has biased composition (polar residues). Thr678 carries the phosphothreonine modification. Phosphoserine is present on Ser682. Residues 693 to 723 (RGWEILRRNTLGHLNLGQDLGEGDGEEIYHF) form an involved in Ca(2+)-dependent inactivation region.

It belongs to the transient receptor (TC 1.A.4) family. TrpV subfamily. TRPV5 sub-subfamily. As to quaternary structure, homotetramer and probably heterotetramer with TRPV6. Interacts with TRPV6. Interacts with S100A10 and probably with the ANAX2-S100A10 heterotetramer. The interaction with S100A10 is required for the trafficking to the plasma membrane. Interacts with calmodulin. Interacts with BSPRY, which results in its inactivation. In terms of processing, glycosylated. In terms of tissue distribution, detected in kidney (at protein level). Detected in kidney.

The protein resides in the cell membrane. The protein localises to the apical cell membrane. It carries out the reaction Ca(2+)(in) = Ca(2+)(out). Its activity is regulated as follows. Activated by WNK3. Constitutively active calcium selective cation channel thought to be involved in Ca(2+) reabsorption in kidney and intestine. Required for normal Ca(2+) reabsorption in the kidney distal convoluted tubules. The channel is activated by low internal calcium level and the current exhibits an inward rectification. A Ca(2+)-dependent feedback regulation includes fast channel inactivation and slow current decay. Heteromeric assembly with TRPV6 seems to modify channel properties. TRPV5-TRPV6 heteromultimeric concatemers exhibit voltage-dependent gating. The chain is Transient receptor potential cation channel subfamily V member 5 (Trpv5) from Rattus norvegicus (Rat).